The sequence spans 357 residues: Quinolinate synthase (357 aa).

His-50 and Ser-71 together coordinate iminosuccinate. Cys-116 is a [4Fe-4S] cluster binding site. Iminosuccinate-binding positions include 142-144 (YAN) and Ser-159. Cys-203 contacts [4Fe-4S] cluster. Iminosuccinate is bound by residues 229–231 (HPE) and Thr-246. Cys-300 contacts [4Fe-4S] cluster.

The protein belongs to the quinolinate synthase family. Type 1 subfamily. Requires [4Fe-4S] cluster as cofactor.

The protein resides in the cytoplasm. It carries out the reaction iminosuccinate + dihydroxyacetone phosphate = quinolinate + phosphate + 2 H2O + H(+). The protein operates within cofactor biosynthesis; NAD(+) biosynthesis; quinolinate from iminoaspartate: step 1/1. Functionally, catalyzes the condensation of iminoaspartate with dihydroxyacetone phosphate to form quinolinate. This chain is Quinolinate synthase, found in Shewanella sp. (strain ANA-3).